The chain runs to 482 residues: MPSYNHTSNGVNMANFRALGGKNTGRGGTYRAPYEWTLESVEQMGLGATENRMSSTLRDASSQLQAVASATVANDISIVDRALTTKLSQTESLKNMLETCLAEVISEIAELLSTKKRLEERNGKVQAKIGVNSNRMQVRSSRPPREMTMDEVEKGLIKQQGMLGSFSDRVARAVAQVDREVAQLEAVRAKLEADLRDKTEALRVDEAVLSIPTDPTVEGTLSPTFRRGAADCPPKTPHTWVRNTEDNLRNAHHWLADSARLRKAIAHAVANSRATEHDVANRLNENMLAKVAATRNLREDLQAQLEKVREEQARAKGQRSALTSALDDKRGPLAQARERLAVRKARPCRENVNDEVEAALAKEVAHLAAVTQQLSVKVAAVDREIAALDATAAQLESNIADKDDALRVDERVVLLDGRINLAQRPPSSVASFAMSDMSAPRTQTLARIRELEASLTSARREREAMESSIRQLRDTMGGGGAF.

Coiled-coil stretches lie at residues 100–129, 171–204, 282–324, 376–407, and 441–478; these read CLAE…QAKI, ARAV…ALRV, RLNE…ALTS, VKVA…DALR, and RTQT…TMGG. The tract at residues 311 to 330 is disordered; sequence EQARAKGQRSALTSALDDKR. Position 462 is an asymmetric dimethylarginine (arginine 462).

Belongs to the tektin family. In terms of processing, asymmetrically dimethylated at Arg-462 during flagellum resorption. Probably methylated by PRMT1.

Its subcellular location is the cytoplasm. The protein resides in the cytoskeleton. It is found in the flagellum axoneme. The protein localises to the flagellum basal body. In terms of biological role, structural component of ciliary and flagellar microtubules. Plays a key role in the assembly or attachment of the inner dynein arm to microtubules in flagella and cilia. Forms filamentous polymers in the walls of ciliary and flagellar microtubules. The chain is Tektin from Chlamydomonas reinhardtii (Chlamydomonas smithii).